The sequence spans 110 residues: UPF0122 protein SPG_1182 (110 aa).

Belongs to the UPF0122 family.

Might take part in the signal recognition particle (SRP) pathway. This is inferred from the conservation of its genetic proximity to ftsY/ffh. May be a regulatory protein. This is UPF0122 protein SPG_1182 from Streptococcus pneumoniae serotype 19F (strain G54).